We begin with the raw amino-acid sequence, 216 residues long: Large ribosomal subunit protein uL3 (216 aa).

Q153 carries the N5-methylglutamine modification.

This sequence belongs to the universal ribosomal protein uL3 family. In terms of assembly, part of the 50S ribosomal subunit. Forms a cluster with proteins L14 and L19. Post-translationally, methylated by PrmB.

One of the primary rRNA binding proteins, it binds directly near the 3'-end of the 23S rRNA, where it nucleates assembly of the 50S subunit. In Burkholderia multivorans (strain ATCC 17616 / 249), this protein is Large ribosomal subunit protein uL3.